A 254-amino-acid chain; its full sequence is Type II restriction enzyme HpaI (254 aa).

The catalysed reaction is Endonucleolytic cleavage of DNA to give specific double-stranded fragments with terminal 5'-phosphates.. Functionally, a P subtype restriction enzyme that recognizes the double-stranded sequence 5'-GTTAAC-3' and cleaves after T-3. The chain is Type II restriction enzyme HpaI (hpaIR) from Haemophilus parainfluenzae.